A 211-amino-acid chain; its full sequence is N-(5'-phosphoribosyl)anthranilate isomerase (211 aa).

Belongs to the TrpF family.

It catalyses the reaction N-(5-phospho-beta-D-ribosyl)anthranilate = 1-(2-carboxyphenylamino)-1-deoxy-D-ribulose 5-phosphate. Its pathway is amino-acid biosynthesis; L-tryptophan biosynthesis; L-tryptophan from chorismate: step 3/5. The polypeptide is N-(5'-phosphoribosyl)anthranilate isomerase (Chromohalobacter salexigens (strain ATCC BAA-138 / DSM 3043 / CIP 106854 / NCIMB 13768 / 1H11)).